The sequence spans 1701 residues: MRGGENRPPARVQSSSEELELRHQSLDAFPGRRLPGRGIQPAAKMSSVGKVTQVPNGKAYQQIFQAEVQLVHSLAATRKRAAERSVTLKSGRIPMMKKVETPEGEVMSPRQQKWMHSLPNDWIMENPVLHREKERAKREKARESENTIAAREVRGLMDTIVPEKISTSTFQRQAEHKRKSYESALASFQEEIAQVGKEMEPLIVDTGGLFLKKLTESDEEMNRLFLKVENDTNLEDYTIQALLELWDKVAGRLLLRKQEIKELDEALHSLEFSRTDKLKSVLKKYAEVIEKTSYLMRPEVYRLINEEAMVMNYALLGNRKALAQLFVNLMESTLQQELDSRHRWQGLVDTWKALKKEALLQSFSEFMASESIHTPPAVTKELEVMLKTQNVLQQRRLKHLCTICDLLPPSYSKTQLTEWHSSLNSLNKELDTYHVDCMMRIRLLYEKTWQECLMHVQNCKKQLLDWKAFTEEEAETLVNQFFFQMVGALQGKVEEDLELLDKSFETLADQTEWQSSHLFKYFQEVVQLWEAHQSELLVQELELEKRMEQHRQKHSLESQVQEAHLDRLLDQLRQQSDKETLAFHLEKVKDYLKNMKSRYECFHTLLTKEVMEYPAIMLKELNSYSSALSQYFFVREIFEQNLAGEVIFKFRQPEAHEKPSQKRVKKLRKKQGSKEDMTRSEESISSGTSTARSVEEVEEENDQEMESFITEEVLGQQKKSPLHAKMDESKEGSIQGLEEMQVEREGSLNPSLNEENVKGQGEKKEESEEEDEKEEEEEEEKLEEEKEEKEAQEEQESLSVGEEEDKEEGLEEIYYEDMESFTISSGNTYFVFVPLEEEHCRKSHSTFSAMFINDTSSAKFIEQVTIPSRLILEIKKQLRAGFFEHLEKWFDQCSLNTRVTVATKINELDSELELHLHLHQPRAQQIEKDIHNVRAAELLLHQEQLDSHCAGVTETLKKKRLMFCQFQEEQNVRSKNFRLKIYDMEHIFLNATRSQKLVTLSNTLHQELLSYVDVTQVSLRSFRQYLEESLGKLRYSNIEFIKHCRLFSEGGNFSPKEINSLCSRLEKEAARIELVESVIMLNMEKLENEYLDQANDVINKFESKFHNLSVDLIFIEKIQRLLTNLQVKIKCQVAKSNSQTNGLNFSLQQLQNKIKTCQESRGEKTTVTTEELLSFVQTWKEKLSQRIQYLNCSLDRVSMTELVFTNTILKDQEEDSDILTSSEALEEEAKLDVVTPESFTQLSRVGKPLIEDPAVDVIRKLLQLPNTKWPTHHCDKDPSQTGRGAWACGSRGSSEAGAGGAVCSPPVLCSCPGPSSPKGFKRHRCQPENSGKKAVPSASATSAGSFTPHPKPNKMERKYRVLGDKPPPAAEDFKGIILTLLWESSENLLTVAEEFYRKEKRPVTRPDCMCDTFDQCAENISKKILEYQSQANKYHNSCLIELRIQIRRFEELLPQVCWLVMENFKEHHWKKFFTSVKEIRGQFEEQQKRLEKRKDKNAQKLHLNLGHPVHFQEMESLHLSEEERQEELDSMIRMNKEKLEECTRRNGQVFITNLATFTEKFLLQLDEVVTIDDVQVARMEPPKQKLSMLIRRKLAGLSLKEESEKPLIERGSRKWPGIKPTEVTIQNKILLQPTSSISTTKTTLGHLAAVEARDAVYLKYLASFEEELKRIQDDCTSQIKEAQRWKDSWKQSLHTIQGLYV.

The segment at 1–35 (MRGGENRPPARVQSSSEELELRHQSLDAFPGRRLP) is disordered. Positions 171 to 198 (QRQAEHKRKSYESALASFQEEIAQVGKE) form a coiled coil. Disordered regions lie at residues 657–808 (EKPS…DKEE), 1272–1291 (HHCD…CGSR), and 1319–1354 (GFKR…KPNK). Over residues 661 to 671 (QKRVKKLRKKQ) the composition is skewed to basic residues. Residues 672-682 (GSKEDMTRSEE) show a composition bias toward basic and acidic residues. Residues 683 to 692 (SISSGTSTAR) show a composition bias toward polar residues. A compositionally biased stretch (acidic residues) spans 696 to 705 (EVEEENDQEM). The segment covering 755–766 (ENVKGQGEKKEE) has biased composition (basic and acidic residues). A coiled-coil region spans residues 757 to 804 (VKGQGEKKEESEEEDEKEEEEEEEKLEEEKEEKEAQEEQESLSVGEEE). Over residues 767–808 (SEEEDEKEEEEEEEKLEEEKEEKEAQEEQESLSVGEEEDKEE) the composition is skewed to acidic residues.

This Homo sapiens (Human) protein is Coiled-coil domain-containing protein 180 (CCDC180).